We begin with the raw amino-acid sequence, 410 residues long: Mating-type locus allele B1 protein (410 aa).

A variable domain between B alleles region spans residues 1–110; it reads MSSDPNFSLI…FNVVSPDVGC (110 aa). The homeobox; TALE-type DNA-binding region spans 107 to 184; the sequence is DVGCRNLSED…NARRRSGWSH (78 aa). A highly conserved between B alleles region spans residues 111 to 410; sequence RNLSEDLPAY…PFLCLSVAFV (300 aa). Disordered stretches follow at residues 202-239, 278-335, and 374-395; these read RAKL…PLTP, TPKP…TPEL, and ARGN…PDEV. Over residues 205 to 233 the composition is skewed to low complexity; sequence LSSSNQSTPPSSTSDSLSNNLDDVLSDNL. Residues 276-308 carry the Nuclear localization signal motif; the sequence is KKTPKPGMPRPVTTVAKRHPARKTKPAAKPKSR. Residues 291-307 are compositionally biased toward basic residues; the sequence is AKRHPARKTKPAAKPKS. Residues 312–335 are compositionally biased toward polar residues; the sequence is PRASTTPSIDSTLDSSKLESTPEL. Residues 333–410 form a not essential for B1 function region; that stretch reads PELSMCSTAD…PFLCLSVAFV (78 aa). A compositionally biased stretch (basic residues) spans 375–388; the sequence is RGNRKVKALPKRAG.

The protein belongs to the TALE/M-ATYP homeobox family.

The protein localises to the nucleus. Functionally, the B locus has at least 25 alleles, and any combination of two different B alleles yields a multimeric regulatory protein, that activates genes responsible for the pathogenicity and for the sexual development of the fungus within the corn plant. This Mycosarcoma maydis (Corn smut fungus) protein is Mating-type locus allele B1 protein.